Reading from the N-terminus, the 766-residue chain is Coenzyme PQQ synthesis protein F (766 aa).

H49 contacts Zn(2+). The active-site Proton acceptor is the E52. Residues H53 and E130 each contribute to the Zn(2+) site.

The protein belongs to the peptidase M16 family. The cofactor is Zn(2+).

Its pathway is cofactor biosynthesis; pyrroloquinoline quinone biosynthesis. Required for coenzyme pyrroloquinoline quinone (PQQ) biosynthesis. It is thought that this protein is a protease that cleaves peptides bond in a small peptide (gene pqqA), providing the glutamate and tyrosine residues which are necessary for the synthesis of PQQ. The chain is Coenzyme PQQ synthesis protein F (pqqF) from Pseudomonas putida (strain ATCC 47054 / DSM 6125 / CFBP 8728 / NCIMB 11950 / KT2440).